A 337-amino-acid chain; its full sequence is Adenylosuccinate synthetase (337 aa).

GTP-binding positions include 12 to 18 (GDEGKGK) and 42 to 44 (GHT). The active-site Proton acceptor is the Asp13. Mg(2+) contacts are provided by Asp13 and Gly42. IMP contacts are provided by residues 13 to 16 (DEGK), 40 to 43 (NAGH), Thr127, Arg141, Gln179, Thr194, and Arg256. Residue His43 is the Proton donor of the active site. 252–258 (TVTGRRR) serves as a coordination point for substrate. Residues Arg258, 284–286 (CLD), and 324–326 (STG) contribute to the GTP site.

It belongs to the adenylosuccinate synthetase family. In terms of assembly, homodimer. Mg(2+) is required as a cofactor.

The protein resides in the cytoplasm. The enzyme catalyses IMP + L-aspartate + GTP = N(6)-(1,2-dicarboxyethyl)-AMP + GDP + phosphate + 2 H(+). It participates in purine metabolism; AMP biosynthesis via de novo pathway; AMP from IMP: step 1/2. Plays an important role in the de novo pathway of purine nucleotide biosynthesis. Catalyzes the first committed step in the biosynthesis of AMP from IMP. The polypeptide is Adenylosuccinate synthetase (Methanococcus maripaludis (strain C6 / ATCC BAA-1332)).